We begin with the raw amino-acid sequence, 266 residues long: Putative pyruvate, phosphate dikinase regulatory protein (266 aa).

147–154 (GLSRTSKT) serves as a coordination point for ADP.

The protein belongs to the pyruvate, phosphate/water dikinase regulatory protein family. PDRP subfamily.

The enzyme catalyses N(tele)-phospho-L-histidyl/L-threonyl-[pyruvate, phosphate dikinase] + ADP = N(tele)-phospho-L-histidyl/O-phospho-L-threonyl-[pyruvate, phosphate dikinase] + AMP + H(+). The catalysed reaction is N(tele)-phospho-L-histidyl/O-phospho-L-threonyl-[pyruvate, phosphate dikinase] + phosphate + H(+) = N(tele)-phospho-L-histidyl/L-threonyl-[pyruvate, phosphate dikinase] + diphosphate. Functionally, bifunctional serine/threonine kinase and phosphorylase involved in the regulation of the pyruvate, phosphate dikinase (PPDK) by catalyzing its phosphorylation/dephosphorylation. This Clostridium perfringens (strain 13 / Type A) protein is Putative pyruvate, phosphate dikinase regulatory protein.